The following is a 245-amino-acid chain: 1-(5-phosphoribosyl)-5-[(5-phosphoribosylamino)methylideneamino] imidazole-4-carboxamide isomerase (245 aa).

The Proton acceptor role is filled by D8. The active-site Proton donor is the D129.

The protein belongs to the HisA/HisF family.

It localises to the cytoplasm. It catalyses the reaction 1-(5-phospho-beta-D-ribosyl)-5-[(5-phospho-beta-D-ribosylamino)methylideneamino]imidazole-4-carboxamide = 5-[(5-phospho-1-deoxy-D-ribulos-1-ylimino)methylamino]-1-(5-phospho-beta-D-ribosyl)imidazole-4-carboxamide. The protein operates within amino-acid biosynthesis; L-histidine biosynthesis; L-histidine from 5-phospho-alpha-D-ribose 1-diphosphate: step 4/9. The polypeptide is 1-(5-phosphoribosyl)-5-[(5-phosphoribosylamino)methylideneamino] imidazole-4-carboxamide isomerase (Sinorhizobium fredii (strain NBRC 101917 / NGR234)).